We begin with the raw amino-acid sequence, 439 residues long: DNA primase DnaG (439 aa).

The 75-residue stretch at 169-243 (DSIIVVEGRA…DIDYVARAPY (75 aa)) folds into the Toprim domain. 3 residues coordinate Mg(2+): E175, D217, and D219.

It belongs to the archaeal DnaG primase family. As to quaternary structure, forms a ternary complex with MCM helicase and DNA. Mg(2+) serves as cofactor.

The enzyme catalyses ssDNA + n NTP = ssDNA/pppN(pN)n-1 hybrid + (n-1) diphosphate.. Its function is as follows. RNA polymerase that catalyzes the synthesis of short RNA molecules used as primers for DNA polymerase during DNA replication. This chain is DNA primase DnaG, found in Methanococcus maripaludis (strain C7 / ATCC BAA-1331).